Reading from the N-terminus, the 669-residue chain is Dymeclin (669 aa).

G2 carries N-myristoyl glycine lipidation.

This sequence belongs to the dymeclin family. In terms of processing, myristoylated in vitro; myristoylation is not essential for protein targeting to Golgi compartment.

The protein localises to the cytoplasm. The protein resides in the golgi apparatus. In terms of biological role, necessary for correct organization of Golgi apparatus. This Xenopus laevis (African clawed frog) protein is Dymeclin (dym).